A 453-amino-acid polypeptide reads, in one-letter code: Mitochondrial import inner membrane translocase subunit TIM44 (453 aa).

T129 is subject to Phosphothreonine. G167–T174 provides a ligand contact to ATP. An N6-succinyllysine modification is found at K178. The residue at position 181 (S181) is a Phosphoserine. K218 is subject to N6-succinyllysine.

Belongs to the Tim44 family. As to quaternary structure, probable component of the PAM complex at least composed of a mitochondrial HSP70 protein, GRPEL1 or GRPEL2, TIMM44, TIMM16/PAM16 and TIMM14/DNAJC19. The complex interacts with the TIMM23 component of the TIM23 complex. Interacts with SLC25A4/ANT1 and SLC25A5/ANT2; leading to inhibit the presequence translocase TIMM23, thereby promoting stabilization of PINK1.

It localises to the mitochondrion inner membrane. Its subcellular location is the mitochondrion matrix. Essential component of the PAM complex, a complex required for the translocation of transit peptide-containing proteins from the inner membrane into the mitochondrial matrix in an ATP-dependent manner. Recruits mitochondrial HSP70 to drive protein translocation into the matrix using ATP as an energy source. The chain is Mitochondrial import inner membrane translocase subunit TIM44 (Timm44) from Rattus norvegicus (Rat).